Here is a 245-residue protein sequence, read N- to C-terminus: SPX domain-containing protein 3 (245 aa).

The 142-residue stretch at methionine 1 to glutamine 142 folds into the SPX domain.

Plays a positive role in plant adaptation to phosphate starvation and exerts negative feedback regulation of SPX1. In Arabidopsis thaliana (Mouse-ear cress), this protein is SPX domain-containing protein 3 (SPX3).